A 263-amino-acid polypeptide reads, in one-letter code: Urease accessory protein UreD 1 (263 aa).

The protein belongs to the UreD family. As to quaternary structure, ureD, UreF and UreG form a complex that acts as a GTP-hydrolysis-dependent molecular chaperone, activating the urease apoprotein by helping to assemble the nickel containing metallocenter of UreC. The UreE protein probably delivers the nickel.

It is found in the cytoplasm. Its function is as follows. Required for maturation of urease via the functional incorporation of the urease nickel metallocenter. The sequence is that of Urease accessory protein UreD 1 from Synechococcus sp. (strain JA-3-3Ab) (Cyanobacteria bacterium Yellowstone A-Prime).